A 332-amino-acid chain; its full sequence is Fructose-1,6-bisphosphatase class 1 (332 aa).

Residues Glu89, Asp110, Leu112, and Asp113 each coordinate Mg(2+). Substrate is bound by residues 113 to 116 (DGSS), Asn206, Tyr239, 257 to 259 (YLY), and Lys269. Glu275 is a binding site for Mg(2+).

This sequence belongs to the FBPase class 1 family. As to quaternary structure, homotetramer. Requires Mg(2+) as cofactor.

It is found in the cytoplasm. The enzyme catalyses beta-D-fructose 1,6-bisphosphate + H2O = beta-D-fructose 6-phosphate + phosphate. It participates in carbohydrate biosynthesis; gluconeogenesis. This is Fructose-1,6-bisphosphatase class 1 from Erwinia tasmaniensis (strain DSM 17950 / CFBP 7177 / CIP 109463 / NCPPB 4357 / Et1/99).